A 494-amino-acid chain; its full sequence is Glycerol kinase (494 aa).

Residue T13 coordinates ADP. T13, T14, and S15 together coordinate ATP. Position 13 (T13) interacts with sn-glycerol 3-phosphate. Residue R17 participates in ADP binding. Sn-glycerol 3-phosphate-binding residues include R83, E84, Y135, and D244. Positions 83, 84, 135, 244, and 245 each coordinate glycerol. 2 residues coordinate ADP: T266 and G309. ATP contacts are provided by T266, G309, Q313, and G410. Residues G410 and N414 each contribute to the ADP site.

This sequence belongs to the FGGY kinase family.

It catalyses the reaction glycerol + ATP = sn-glycerol 3-phosphate + ADP + H(+). It functions in the pathway polyol metabolism; glycerol degradation via glycerol kinase pathway; sn-glycerol 3-phosphate from glycerol: step 1/1. Inhibited by fructose 1,6-bisphosphate (FBP). In terms of biological role, key enzyme in the regulation of glycerol uptake and metabolism. Catalyzes the phosphorylation of glycerol to yield sn-glycerol 3-phosphate. The protein is Glycerol kinase of Shewanella baltica (strain OS195).